Reading from the N-terminus, the 185-residue chain is ATP synthase subunit b 2 (185 aa).

Residues 1-25 (MAESHGNAHGATAHTEADGGHKAPF) form a disordered region. The chain crosses the membrane as a helical span at residues 34–56 (ASQLVSLTIAFVALYLISSRLAL).

It belongs to the ATPase B chain family. F-type ATPases have 2 components, F(1) - the catalytic core - and F(0) - the membrane proton channel. F(1) has five subunits: alpha(3), beta(3), gamma(1), delta(1), epsilon(1). F(0) has three main subunits: a(1), b(2) and c(10-14). The alpha and beta chains form an alternating ring which encloses part of the gamma chain. F(1) is attached to F(0) by a central stalk formed by the gamma and epsilon chains, while a peripheral stalk is formed by the delta and b chains.

It is found in the cell inner membrane. Functionally, f(1)F(0) ATP synthase produces ATP from ADP in the presence of a proton or sodium gradient. F-type ATPases consist of two structural domains, F(1) containing the extramembraneous catalytic core and F(0) containing the membrane proton channel, linked together by a central stalk and a peripheral stalk. During catalysis, ATP synthesis in the catalytic domain of F(1) is coupled via a rotary mechanism of the central stalk subunits to proton translocation. Component of the F(0) channel, it forms part of the peripheral stalk, linking F(1) to F(0). The b'-subunit is a diverged and duplicated form of b found in plants and photosynthetic bacteria. The sequence is that of ATP synthase subunit b 2 (atpF2) from Nitrobacter winogradskyi (strain ATCC 25391 / DSM 10237 / CIP 104748 / NCIMB 11846 / Nb-255).